The chain runs to 166 residues: Vasopressin-neurophysin 2-copeptin (166 aa).

Residues 1–19 form the signal peptide; that stretch reads MPDATLPACFLSLLAFTSA. Cysteines 20 and 25 form a disulfide. At glycine 28 the chain carries Glycine amide. 7 cysteine pairs are disulfide-bonded: cysteine 41/cysteine 85, cysteine 44/cysteine 58, cysteine 52/cysteine 75, cysteine 59/cysteine 65, cysteine 92/cysteine 104, cysteine 98/cysteine 116, and cysteine 105/cysteine 110. Asparagine 133 carries N-linked (GlcNAc...) asparagine glycosylation.

This sequence belongs to the vasopressin/oxytocin family. Interacts with vasopressin receptors V1bR/AVPR1B (Ki=85 pM), V1aR/AVPR1A (Ki=0.6 nM) and V2R/AVPR2 (Ki=4.9 nM). Interacts with oxytocin receptor (OXTR) (Ki=110 nM).

Its subcellular location is the secreted. Functionally, neurophysin 2 specifically binds vasopressin. Its function is as follows. Vasopressin has a direct antidiuretic action on the kidney, it also causes vasoconstriction of the peripheral vessels. Acts by binding to vasopressin receptors (V1bR/AVPR1B, V1aR/AVPR1A, and V2R/AVPR2). In Bos taurus (Bovine), this protein is Vasopressin-neurophysin 2-copeptin (AVP).